The primary structure comprises 665 residues: FAD-dependent oxidoreductase domain-containing protein 2 (665 aa).

An N-terminal signal peptide occupies residues 1–17; the sequence is MGPSGLLVALALHLAVC. Asparagine 136 carries an N-linked (GlcNAc...) asparagine glycan. Residues 642-665 are disordered; sequence RWLGDHSTAPEPLTQSLDSNKEEL. The short motif at 662 to 665 is the Prevents secretion from ER element; the sequence is KEEL.

The protein belongs to the FOXRED2 family. Interacts with SEL1L. May interact with OS9 and DNAJC10. Interacts with TXNDC16. It depends on FAD as a cofactor. N-glycosylated.

It localises to the endoplasmic reticulum lumen. Its function is as follows. Probable flavoprotein which may function in endoplasmic reticulum associated degradation (ERAD). May bind non-native proteins in the endoplasmic reticulum and target them to the ubiquitination machinery for subsequent degradation. This chain is FAD-dependent oxidoreductase domain-containing protein 2, found in Mus musculus (Mouse).